Here is a 260-residue protein sequence, read N- to C-terminus: Cytosolic Fe-S cluster assembly factor Nubp2 homolog (260 aa).

An ATP-binding site is contributed by 14-21 (GKGGVGKS). Residues C188 and C191 each contribute to the [4Fe-4S] cluster site.

It belongs to the Mrp/NBP35 ATP-binding proteins family. NUBP2/CFD1 subfamily. Heterotetramer of 2 Nubp1 and 2 Nubp2 chains. It depends on [4Fe-4S] cluster as a cofactor.

It is found in the cytoplasm. Its function is as follows. Component of the cytosolic iron-sulfur (Fe/S) protein assembly (CIA) machinery. Required for maturation of extramitochondrial Fe-S proteins. The Nubp1-Nubp2 heterotetramer forms a Fe-S scaffold complex, mediating the de novo assembly of an Fe-S cluster and its transfer to target apoproteins. The chain is Cytosolic Fe-S cluster assembly factor Nubp2 homolog from Drosophila melanogaster (Fruit fly).